Here is a 261-residue protein sequence, read N- to C-terminus: Epidermal growth factor-binding protein type B (261 aa).

The first 16 residues, 1 to 16 (MWFLILFLALSLGGID), serve as a signal peptide directing secretion. The propeptide at 17-24 (AAPPLQSR) is activation peptide. The Peptidase S1 domain maps to 25-258 (VVGGFNCKKN…FNSWIKDTMM (234 aa)). 5 disulfide bridges follow: C31–C173, C50–C66, C152–C219, C184–C198, and C209–C234. H65 functions as the Charge relay system in the catalytic mechanism. A glycan (N-linked (GlcNAc...) asparagine) is linked at N102. D120 acts as the Charge relay system in catalysis. Residue S213 is the Charge relay system of the active site.

This sequence belongs to the peptidase S1 family. Kallikrein subfamily.

The enzyme catalyses Hydrolyzes mouse Ren2 protein (a species of prorenin present in the submandibular gland) on the carboxy side of the arginine residue at the Lys-Arg-|- pair in the N-terminus, to yield mature renin.. In terms of biological role, cleaves REN2 at a dibasic site to yield mature renin. The sequence is that of Epidermal growth factor-binding protein type B (Egfbp2) from Mus musculus (Mouse).